A 223-amino-acid polypeptide reads, in one-letter code: DNA mismatch repair protein MutH (223 aa).

The protein belongs to the MutH family.

Its subcellular location is the cytoplasm. In terms of biological role, sequence-specific endonuclease that cleaves unmethylated GATC sequences. It is involved in DNA mismatch repair. In Shewanella sp. (strain ANA-3), this protein is DNA mismatch repair protein MutH.